We begin with the raw amino-acid sequence, 284 residues long: Nucleotide-binding protein SO_3964 (284 aa).

ATP is bound at residue Gly8 to Ser15. Residue Asp56 to Asn59 participates in GTP binding.

This sequence belongs to the RapZ-like family.

Its function is as follows. Displays ATPase and GTPase activities. The polypeptide is Nucleotide-binding protein SO_3964 (Shewanella oneidensis (strain ATCC 700550 / JCM 31522 / CIP 106686 / LMG 19005 / NCIMB 14063 / MR-1)).